We begin with the raw amino-acid sequence, 363 residues long: Elongation factor Tu, chloroplastic (363 aa).

Residues 1–189 enclose the tr-type G domain; that stretch reads TLTAAITMAL…NVDEYIPTPE (189 aa). Residues 55–59 and 110–113 contribute to the GTP site; these read DCPGH and NKED.

This sequence belongs to the TRAFAC class translation factor GTPase superfamily. Classic translation factor GTPase family. EF-Tu/EF-1A subfamily.

Its subcellular location is the plastid. It localises to the chloroplast. It catalyses the reaction GTP + H2O = GDP + phosphate + H(+). Its function is as follows. GTP hydrolase that promotes the GTP-dependent binding of aminoacyl-tRNA to the A-site of ribosomes during protein biosynthesis. This Gymnochlora stellata protein is Elongation factor Tu, chloroplastic (tufA).